The primary structure comprises 248 residues: MQAPQTTVDPSEIAKFEAMAAEWWDENGKFKPLHMLNPCRLDYITTQIAGEFDRDLASPEPFKGLRILDIGCGGGLLAEPMARLGADVVGADAAERNIPVARVHAEQSGLTIDYRHTTAEALAAEGEQFDVVLNMEVVEHVASPIDYLIACRQLLKPGGLQVCSTLNRNPKSYVMAIIGAEHVMRWLPKGTHEWSKFITPDELYDLLRQSGMDPVDRKGFVFNPISWSWKLSGRDLSVNYVTASVKPA.

Residues Arg40, Gly71, Asp92, and Met135 each contribute to the S-adenosyl-L-methionine site.

The protein belongs to the methyltransferase superfamily. UbiG/COQ3 family.

The enzyme catalyses a 3-demethylubiquinol + S-adenosyl-L-methionine = a ubiquinol + S-adenosyl-L-homocysteine + H(+). The catalysed reaction is a 3-(all-trans-polyprenyl)benzene-1,2-diol + S-adenosyl-L-methionine = a 2-methoxy-6-(all-trans-polyprenyl)phenol + S-adenosyl-L-homocysteine + H(+). It participates in cofactor biosynthesis; ubiquinone biosynthesis. O-methyltransferase that catalyzes the 2 O-methylation steps in the ubiquinone biosynthetic pathway. This is Ubiquinone biosynthesis O-methyltransferase from Roseobacter denitrificans (strain ATCC 33942 / OCh 114) (Erythrobacter sp. (strain OCh 114)).